A 956-amino-acid chain; its full sequence is RNA-silencing factor ers1 (956 aa).

Its subcellular location is the cytoplasm. It localises to the cytoskeleton. The protein resides in the microtubule organizing center. The protein localises to the spindle pole body. Functionally, involved in RNAi-dependent heterochromatin formation and centromeric silencing. Required for the conversion of centromeric pre-small interfering RNA transcripts into small interfering RNAs, histone H3 'Lys9' methylation, and the recruitment of the RITS complex to centromeric sequences. The sequence is that of RNA-silencing factor ers1 (ers1) from Schizosaccharomyces pombe (strain 972 / ATCC 24843) (Fission yeast).